A 486-amino-acid polypeptide reads, in one-letter code: Outer dynein arm-docking complex subunit 4 (486 aa).

TPR repeat units lie at residues 14 to 47 (FTTY…QPDD), 49 to 81 (NCLV…NKNY), and 82 to 115 (FKGL…RPEL). The segment at 153-180 (GVHPQNLNPSNKKESKKHSKKTDKGEKT) is disordered. 4 TPR repeats span residues 314 to 347 (GNLH…AKKC), 354 to 387 (SRAL…ACGG), 391 to 424 (AWLF…ADDI), and 431 to 464 (LNAS…AKLL).

Component of the outer dynein arm-docking complex along with ODAD1, ODAD2 and ODAD3.

It localises to the cytoplasm. Its subcellular location is the cytoskeleton. The protein resides in the cilium axoneme. Functionally, component of the outer dynein arm-docking complex (ODA-DC) that mediates outer dynein arms (ODA) binding onto the doublet microtubule. Plays an essential role for the assembly of ODA-DC and in the docking of ODA in ciliary axoneme. This is Outer dynein arm-docking complex subunit 4 (odad4) from Danio rerio (Zebrafish).